A 188-amino-acid polypeptide reads, in one-letter code: Elongation factor P (188 aa).

The protein belongs to the elongation factor P family.

The protein resides in the cytoplasm. The protein operates within protein biosynthesis; polypeptide chain elongation. In terms of biological role, involved in peptide bond synthesis. Stimulates efficient translation and peptide-bond synthesis on native or reconstituted 70S ribosomes in vitro. Probably functions indirectly by altering the affinity of the ribosome for aminoacyl-tRNA, thus increasing their reactivity as acceptors for peptidyl transferase. In Streptomyces coelicolor (strain ATCC BAA-471 / A3(2) / M145), this protein is Elongation factor P.